The chain runs to 137 residues: Peptide methionine sulfoxide reductase MsrB (137 aa).

The tract at residues 1–33 (MSNNQDRPGQITDESLRERLSPEAYAVTRRAGT) is disordered. The region spanning 13–135 (DESLRERLSP…NSLSLDFKAA (123 aa)) is the MsrB domain. Zn(2+) contacts are provided by Cys-52, Cys-55, Cys-101, and Cys-104. Catalysis depends on Cys-124, which acts as the Nucleophile.

The protein belongs to the MsrB Met sulfoxide reductase family. It depends on Zn(2+) as a cofactor.

It carries out the reaction L-methionyl-[protein] + [thioredoxin]-disulfide + H2O = L-methionyl-(R)-S-oxide-[protein] + [thioredoxin]-dithiol. This chain is Peptide methionine sulfoxide reductase MsrB, found in Thioalkalivibrio sulfidiphilus (strain HL-EbGR7).